A 183-amino-acid chain; its full sequence is MKQLLDFLPLVIFFAVYKLFDIYAASGALIAATALQLIVTYLLYKKIEKMHLITFVMVTVFGTLTLVFHDDAFIKWKVTVVYALFAIALAVSQLINKPILKSMLGKELVVEDRIWAHVTWYWVSFFITCALVNIYVAFSLPQEVWVNFKVFGLTALTLVNTVITVIYLYKNMPEEHKKELNNK.

The next 5 helical transmembrane spans lie at 10–30, 50–70, 72–92, 118–138, and 148–168; these read LVIF…GALI, MHLI…VFHD, AFIK…LAVS, VTWY…YVAF, and FKVF…VIYL.

The protein belongs to the YciB family.

It localises to the cell inner membrane. Its function is as follows. Plays a role in cell envelope biogenesis, maintenance of cell envelope integrity and membrane homeostasis. The sequence is that of Inner membrane-spanning protein YciB from Shewanella sediminis (strain HAW-EB3).